A 432-amino-acid chain; its full sequence is Asparagine--tRNA ligase (432 aa).

The protein belongs to the class-II aminoacyl-tRNA synthetase family. In terms of assembly, homodimer.

The protein resides in the cytoplasm. It carries out the reaction tRNA(Asn) + L-asparagine + ATP = L-asparaginyl-tRNA(Asn) + AMP + diphosphate + H(+). In Lacticaseibacillus paracasei (strain ATCC 334 / BCRC 17002 / CCUG 31169 / CIP 107868 / KCTC 3260 / NRRL B-441) (Lactobacillus paracasei), this protein is Asparagine--tRNA ligase.